Consider the following 212-residue polypeptide: Mediator of RNA polymerase II transcription subunit 20 (212 aa).

It belongs to the Mediator complex subunit 20 family. Component of the Mediator complex, which is composed of MED1, MED4, MED6, MED7, MED8, MED9, MED10, MED11, MED12, MED13, MED13L, MED14, MED15, MED16, MED17, MED18, MED19, MED20, MED21, MED22, MED23, MED24, MED25, MED26, MED27, MED29, MED30, MED31, CCNC, CDK8 and CDC2L6/CDK11. The MED12, MED13, CCNC and CDK8 subunits form a distinct module termed the CDK8 module. Mediator containing the CDK8 module is less active than Mediator lacking this module in supporting transcriptional activation. Individual preparations of the Mediator complex lacking one or more distinct subunits have been variously termed ARC, CRSP, DRIP, PC2, SMCC and TRAP. Interacts with PPARG.

The protein resides in the nucleus. Functionally, component of the Mediator complex, a coactivator involved in the regulated transcription of nearly all RNA polymerase II-dependent genes. Mediator functions as a bridge to convey information from gene-specific regulatory proteins to the basal RNA polymerase II transcription machinery. Mediator is recruited to promoters by direct interactions with regulatory proteins and serves as a scaffold for the assembly of a functional preinitiation complex with RNA polymerase II and the general transcription factors. This is Mediator of RNA polymerase II transcription subunit 20 (MED20) from Macaca fascicularis (Crab-eating macaque).